Consider the following 87-residue polypeptide: MANIKSAKKRAIQSEKRRQHNASRRSMTRTYLKKVIAAIASGDKAAAVAAFATAQPIMDRMATKGLIHKNKAARHKSRLSAQIKAMA.

The interval 1–27 (MANIKSAKKRAIQSEKRRQHNASRRSM) is disordered.

The protein belongs to the bacterial ribosomal protein bS20 family.

Its function is as follows. Binds directly to 16S ribosomal RNA. The chain is Small ribosomal subunit protein bS20 from Aeromonas salmonicida (strain A449).